A 293-amino-acid chain; its full sequence is Vibriobactin-specific isochorismatase (293 aa).

One can recognise a Carrier domain in the interval 211–287 (KLTGLSLRTM…QWWQTIQANL (77 aa)). Ser-248 bears the O-(pantetheine 4'-phosphoryl)serine mark.

This sequence belongs to the isochorismatase family. Pantetheine 4'-phosphate serves as cofactor.

It catalyses the reaction isochorismate + H2O = (2S,3S)-2,3-dihydroxy-2,3-dihydrobenzoate + pyruvate. It functions in the pathway siderophore biosynthesis; vibriobactin biosynthesis. Functionally, involved in the biosynthesis of the catechol siderophore vibriobactin. Vibriobactin is a chelating compound involved in transporting iron from the bacterial environment into the cell cytoplasm. The sequence is that of Vibriobactin-specific isochorismatase (vibB) from Vibrio cholerae serotype O1 (strain ATCC 39541 / Classical Ogawa 395 / O395).